The chain runs to 204 residues: VEL1-related protein AC977.05c (204 aa).

A signal peptide spans 1–17; the sequence is MIFKNLISLFFIGLATA.

This sequence belongs to the VEL1 family.

It localises to the cytoplasm. It is found in the cytosol. The chain is VEL1-related protein AC977.05c from Schizosaccharomyces pombe (strain 972 / ATCC 24843) (Fission yeast).